The following is a 1237-amino-acid chain: uncharacterized protein (1237 aa).

An MHD1 domain is found at 591–712; the sequence is KDMLEIYSDL…IVLSKYTQWT (122 aa). The 121-residue stretch at 786-906 folds into the C2 domain; the sequence is LIEALDVAES…GDYLPREEWF (121 aa). One can recognise an MHD2 domain in the interval 1014–1130; it reads EAAIYELLDY…KPTDFLLQEC (117 aa).

This is an uncharacterized protein from Schizosaccharomyces pombe (strain 972 / ATCC 24843) (Fission yeast).